The primary structure comprises 355 residues: Chemerin-like receptor 2 (355 aa).

Topologically, residues 1–41 are extracellular; the sequence is MEDLEETLFEEFENYSYALDYYSLESDLEEKVQLGVVHWVS. Asn-14 carries an N-linked (GlcNAc...) asparagine glycan. Residues 42–62 form a helical membrane-spanning segment; that stretch reads LVLYCLSFVLGIPGNAIVIWF. Residues 63–73 lie on the Cytoplasmic side of the membrane; the sequence is TGFKWKRTVST. Residues 74–94 form a helical membrane-spanning segment; it reads LWFLNLAIADFIFLLFLPLYI. The Extracellular portion of the chain corresponds to 95-112; sequence SYVVMNFHWPFGIWLCKA. Cys-110 and Cys-187 form a disulfide bridge. The chain crosses the membrane as a helical span at residues 113–133; that stretch reads NSFTAQLNMFASVFFLTVISL. Residues 134-154 lie on the Cytoplasmic side of the membrane; it reads DHYIHLIHPVLSHRHRTLKNS. Residues 155-175 form a helical membrane-spanning segment; that stretch reads LIVIIFIWLLASLIGGPALYF. Topologically, residues 176-210 are extracellular; the sequence is RDTVEFNNHTLCYNNFQKHDPDLTVIRHHVLTWVK. A helical membrane pass occupies residues 211–231; that stretch reads YIVGYLFPLLTMSICYLCLIL. Topologically, residues 232–247 are cytoplasmic; that stretch reads KVKKRSILISSRHFWT. The chain crosses the membrane as a helical span at residues 248–268; the sequence is ILAVVVAFVVCWTPYHLFSIW. The Extracellular portion of the chain corresponds to 269–286; the sequence is ELTIHHNSYSHHVMQAGI. A helical membrane pass occupies residues 287 to 307; it reads PLSTGLAFLNSCLNPILYVLI. The Cytoplasmic segment spans residues 308-355; it reads SKKFQARFRSSVAEILKYTLWEVSCSGTVSEQLRNSETKNLCLLETAQ.

Belongs to the chemokine-like receptor (CMKLR) family.

Its subcellular location is the cell membrane. Functionally, receptor for chemoattractant adipokine chemerin/RARRES2 suggesting a role for this receptor in the regulation of inflammation and energy homesotasis. Signals mainly via beta-arrestin pathway. Binding of RARRES2 activates weakly G proteins, calcium mobilization and MAPK1/MAPK3 (ERK1/2) phosphorylation too. Acts also as a receptor for TAFA1, mediates its effects on neuronal stem-cell proliferation and differentiation via the activation of ROCK/ERK and ROCK/STAT3 signaling pathway. The chain is Chemerin-like receptor 2 (CMKLR2) from Macaca fascicularis (Crab-eating macaque).